The primary structure comprises 652 residues: Regulator of DNA class I crossover intermediates 1 (652 aa).

The segment at residues 1–231 (MNWVGGSRSR…TLFERLNSLG (231 aa)) is a DNA-binding region (binds DNA containing a D-loop). Disordered regions lie at residues 363–434 (NKTS…NIPS) and 469–506 (KISL…EDQI). Residues 377-388 (YQREYNKNERND) are compositionally biased toward basic and acidic residues. The segment covering 389–401 (LSTSFENDYYPSS) has biased composition (polar residues). Positions 402-417 (SERKEKFENDYQEKTP) are enriched in basic and acidic residues. Residues 473 to 498 (DSAQSSRSTSYSPRPTDSCFSSSSDL) show a composition bias toward low complexity.

As to quaternary structure, interacts with MSH5. Interacts with TEX11.

The protein resides in the chromosome. Involved in recombination, probably acting by stabilizing recombination intermediates during meiotic crossover formation. Required for normal germline development and fertility. Required for meiotic progression, complete chromosomal synapsis and crossover formation. Binds double-stranded DNA. However, also binds branched DNA molecules, such as those containing a D-loop or Holliday junction structure. Probably not required for formation of DNA double-strand breaks (DSBs). Also binds RNA in an RNA structure-independent manner, with a preference for binding 3'-UTR regions of mRNAs; may stabilize bound RNAs. This chain is Regulator of DNA class I crossover intermediates 1, found in Homo sapiens (Human).